Consider the following 180-residue polypeptide: NAD(P)H-quinone oxidoreductase subunit I, chloroplastic (180 aa).

4Fe-4S ferredoxin-type domains lie at 55–84 (GRIH…VDWR) and 95–124 (LNYS…MTEE). [4Fe-4S] cluster-binding residues include cysteine 64, cysteine 67, cysteine 70, cysteine 74, cysteine 104, cysteine 107, cysteine 110, and cysteine 114.

Belongs to the complex I 23 kDa subunit family. NDH is composed of at least 16 different subunits, 5 of which are encoded in the nucleus. The cofactor is [4Fe-4S] cluster.

The protein localises to the plastid. It localises to the chloroplast thylakoid membrane. It catalyses the reaction a plastoquinone + NADH + (n+1) H(+)(in) = a plastoquinol + NAD(+) + n H(+)(out). It carries out the reaction a plastoquinone + NADPH + (n+1) H(+)(in) = a plastoquinol + NADP(+) + n H(+)(out). Functionally, NDH shuttles electrons from NAD(P)H:plastoquinone, via FMN and iron-sulfur (Fe-S) centers, to quinones in the photosynthetic chain and possibly in a chloroplast respiratory chain. The immediate electron acceptor for the enzyme in this species is believed to be plastoquinone. Couples the redox reaction to proton translocation, and thus conserves the redox energy in a proton gradient. The sequence is that of NAD(P)H-quinone oxidoreductase subunit I, chloroplastic from Dioscorea elephantipes (Elephant's foot yam).